We begin with the raw amino-acid sequence, 601 residues long: Group B oligopeptidase PepB (601 aa).

Histidine 386 serves as a coordination point for Zn(2+). Glutamate 387 is a catalytic residue. The Zn(2+) site is built by histidine 390 and histidine 393.

This sequence belongs to the peptidase M3B family. Requires Zn(2+) as cofactor.

The protein localises to the cytoplasm. In terms of biological role, has oligopeptidase activity and degrades a variety of small bioactive peptides, including bradykinin, neurotensin, and peptide fragments of substance P and adrenocorticotropin. Also hydrolyzes the synthetic collagen-like substrate N-(3-[2-furyl]acryloyl)-Leu-Gly-Pro-Ala (FALGPA). This is Group B oligopeptidase PepB (pepB) from Streptococcus agalactiae serotype III (strain NEM316).